Reading from the N-terminus, the 334-residue chain is Nucleoid-associated protein YPTS_1390 (334 aa).

The protein belongs to the YejK family.

Its subcellular location is the cytoplasm. It is found in the nucleoid. The sequence is that of Nucleoid-associated protein YPTS_1390 from Yersinia pseudotuberculosis serotype IB (strain PB1/+).